The primary structure comprises 224 residues: Glutathione S-transferase U4 (224 aa).

The region spanning Glu6 to Pro85 is the GST N-terminal domain. Residues Ser16–Pro17, Asn42–Lys43, Lys56–Val57, and Glu69–Ser70 each bind glutathione. Positions Asp90–Val217 constitute a GST C-terminal domain. Thr151 bears the Phosphothreonine mark.

Belongs to the GST superfamily. Tau family.

The protein localises to the cytoplasm. The protein resides in the cytosol. It carries out the reaction RX + glutathione = an S-substituted glutathione + a halide anion + H(+). Its function is as follows. May be involved in the conjugation of reduced glutathione to a wide number of exogenous and endogenous hydrophobic electrophiles and have a detoxification role against certain herbicides. This is Glutathione S-transferase U4 (GSTU4) from Arabidopsis thaliana (Mouse-ear cress).